Here is a 78-residue protein sequence, read N- to C-terminus: NAD(P)H-quinone oxidoreductase subunit L (78 aa).

A run of 2 helical transmembrane segments spans residues 10-30 and 47-67; these read IILI…PAIV and VFMY…SPFL.

Belongs to the complex I NdhL subunit family. In terms of assembly, NDH-1 can be composed of about 15 different subunits; different subcomplexes with different compositions have been identified which probably have different functions.

Its subcellular location is the cellular thylakoid membrane. It carries out the reaction a plastoquinone + NADH + (n+1) H(+)(in) = a plastoquinol + NAD(+) + n H(+)(out). The enzyme catalyses a plastoquinone + NADPH + (n+1) H(+)(in) = a plastoquinol + NADP(+) + n H(+)(out). Its function is as follows. NDH-1 shuttles electrons from an unknown electron donor, via FMN and iron-sulfur (Fe-S) centers, to quinones in the respiratory and/or the photosynthetic chain. The immediate electron acceptor for the enzyme in this species is believed to be plastoquinone. Couples the redox reaction to proton translocation, and thus conserves the redox energy in a proton gradient. Cyanobacterial NDH-1 also plays a role in inorganic carbon-concentration. This chain is NAD(P)H-quinone oxidoreductase subunit L, found in Trichodesmium erythraeum (strain IMS101).